A 262-amino-acid chain; its full sequence is Tryptophan synthase alpha chain (262 aa).

Residues E48 and D59 each act as proton acceptor in the active site.

It belongs to the TrpA family. In terms of assembly, tetramer of two alpha and two beta chains.

It catalyses the reaction (1S,2R)-1-C-(indol-3-yl)glycerol 3-phosphate + L-serine = D-glyceraldehyde 3-phosphate + L-tryptophan + H2O. The protein operates within amino-acid biosynthesis; L-tryptophan biosynthesis; L-tryptophan from chorismate: step 5/5. Functionally, the alpha subunit is responsible for the aldol cleavage of indoleglycerol phosphate to indole and glyceraldehyde 3-phosphate. This chain is Tryptophan synthase alpha chain, found in Helicobacter pylori (strain G27).